The sequence spans 316 residues: Beta-ketoacyl-[acyl-carrier-protein] synthase III (316 aa).

Catalysis depends on residues cysteine 112 and histidine 243. The tract at residues 244 to 248 (QANLR) is ACP-binding. The active site involves asparagine 273.

The protein belongs to the thiolase-like superfamily. FabH family. In terms of assembly, homodimer.

It is found in the cytoplasm. The enzyme catalyses malonyl-[ACP] + acetyl-CoA + H(+) = 3-oxobutanoyl-[ACP] + CO2 + CoA. It participates in lipid metabolism; fatty acid biosynthesis. Catalyzes the condensation reaction of fatty acid synthesis by the addition to an acyl acceptor of two carbons from malonyl-ACP. Catalyzes the first condensation reaction which initiates fatty acid synthesis and may therefore play a role in governing the total rate of fatty acid production. Possesses both acetoacetyl-ACP synthase and acetyl transacylase activities. Its substrate specificity determines the biosynthesis of branched-chain and/or straight-chain of fatty acids. The sequence is that of Beta-ketoacyl-[acyl-carrier-protein] synthase III from Histophilus somni (strain 2336) (Haemophilus somnus).